The primary structure comprises 37 residues: Small ribosomal subunit protein eS32 (37 aa).

This sequence belongs to the eukaryotic ribosomal protein eS32 family. In terms of assembly, part of the small ribosomal subunit.

Its function is as follows. Interacts with N(4)-acetylcytidine (ac(4)C) 1459 of the small rRNA; the acetyl group of ac(4)C1459 briges the interaction with this protein. The chain is Small ribosomal subunit protein eS32 (rpl41e) from Thermococcus kodakarensis (strain ATCC BAA-918 / JCM 12380 / KOD1) (Pyrococcus kodakaraensis (strain KOD1)).